Reading from the N-terminus, the 290-residue chain is UPF0761 membrane protein YihY (290 aa).

6 helical membrane-spanning segments follow: residues 44-64 (LLSL…FPMF), 104-124 (VGAC…DSAL), 140-160 (FAVY…SLAI), 183-203 (IFPL…VPTI), 210-230 (AIVG…GFAL), and 244-264 (VLAV…IVLL).

It belongs to the UPF0761 family.

Its subcellular location is the cell inner membrane. The chain is UPF0761 membrane protein YihY from Shigella boydii serotype 4 (strain Sb227).